The following is a 165-amino-acid chain: Sporulation thiol-disulfide oxidoreductase A (165 aa).

An N-terminal signal peptide occupies residues 1–26; it reads MLTKRLLTIYIMLLGLIAWFPGAAQA. The Thioredoxin domain maps to 27-165; the sequence is EEKQPAVPAV…AEQLKEWTEE (139 aa). Cys-65 and Cys-68 form a disulfide bridge.

This sequence belongs to the thioredoxin family.

It is found in the spore outer membrane. In terms of biological role, thiol-disulfide oxidoreductase with a reductive function, involved in spore cortex synthesis. It could be involved either in breaking disulfide bonds in cortex components or in proteins that are important for cortex synthesis, or in thiol/disulfide bond interchange. In Bacillus subtilis (strain 168), this protein is Sporulation thiol-disulfide oxidoreductase A (stoA).